The following is a 124-amino-acid chain: Small ribosomal subunit protein uS12 (124 aa).

Asp-89 carries the post-translational modification 3-methylthioaspartic acid.

The protein belongs to the universal ribosomal protein uS12 family. In terms of assembly, part of the 30S ribosomal subunit. Contacts proteins S8 and S17. May interact with IF1 in the 30S initiation complex.

In terms of biological role, with S4 and S5 plays an important role in translational accuracy. Functionally, interacts with and stabilizes bases of the 16S rRNA that are involved in tRNA selection in the A site and with the mRNA backbone. Located at the interface of the 30S and 50S subunits, it traverses the body of the 30S subunit contacting proteins on the other side and probably holding the rRNA structure together. The combined cluster of proteins S8, S12 and S17 appears to hold together the shoulder and platform of the 30S subunit. The sequence is that of Small ribosomal subunit protein uS12 from Aliivibrio fischeri (strain ATCC 700601 / ES114) (Vibrio fischeri).